A 438-amino-acid chain; its full sequence is MKPLHYTASALALGLALMGNAQAVTTIPFWHSMEGELGKEVDSLAQRFNAENPDYKIVPTYKGNYEQNLSAGIAAFRTGNAPAILQVYEVGTATMMASKAIKPVYDVFKEAGIQFDESQFVPTVSGYYSDSKTGHLLSQPFNSSTPVLYYNKDAFKKAGLDPEQPPKTWQDLADYSAKLKASGIKCGYASGWQGWIQLENFSAWNGLPFASKNNGFDGTDAVLEFNKPEQVKHIAMLEEMNKKGDFSYVGRKDESTEKFYNGDCAMTTASSGSLANIREYAKFNYGVGMMPYDADAKDAPQNAIIGGASLWVMQGKDKETYTGVAKFLDFLAKPENAAEWHQKTGYLPITKAAYDLTREQGFYEKNPGADTATRQMLNKPPLPFTKGLRLGNMPQIRVIVDEELESVWTGKKTPQQALDTAVERGNQLLRRFEKSTKS.

The signal sequence occupies residues methionine 1–alanine 23. Tyrosine 65, glutamate 89, serine 144, serine 270, glycine 307, tyrosine 346, and arginine 397 together coordinate sn-glycerol 3-phosphate.

It belongs to the bacterial solute-binding protein 1 family. In terms of assembly, the complex is composed of two ATP-binding proteins (UgpC), two transmembrane proteins (UgpA and UgpE) and a solute-binding protein (UgpB).

It is found in the periplasm. Part of the ABC transporter complex UgpBAEC involved in sn-glycerol-3-phosphate (G3P) import. Binds G3P. The sequence is that of sn-glycerol-3-phosphate-binding periplasmic protein UgpB (ugpB) from Shigella flexneri serotype 5b (strain 8401).